Consider the following 122-residue polypeptide: Large ribosomal subunit protein uL14c (122 aa).

This sequence belongs to the universal ribosomal protein uL14 family. As to quaternary structure, part of the 50S ribosomal subunit.

The protein localises to the plastid. The protein resides in the chloroplast. Binds to 23S rRNA. The sequence is that of Large ribosomal subunit protein uL14c from Calycanthus floridus var. glaucus (Eastern sweetshrub).